The sequence spans 386 residues: Leupaxin (386 aa).

Methionine 1 carries the post-translational modification N-acetylmethionine. The LD motif 1 motif lies at 3-15 (ELDALLEELERST). The disordered stretch occupies residues 13–41 (RSTLQDSDEYSNPAPLPLDQHSRKETNLD). A Phosphoserine modification is found at serine 19. Position 22 is a phosphotyrosine (tyrosine 22). The residue at position 54 (serine 54) is a Phosphoserine. Tyrosine 62 is subject to Phosphotyrosine. 2 short sequence motifs (LD motif) span residues 70-82 (NVYS…KESP) and 92-103 (QLDELMAHLTEM). Tyrosine 72 is subject to Phosphotyrosine; by LYN. Serine 81 carries the post-translational modification Phosphoserine. LIM zinc-binding domains follow at residues 150-208 (GHCA…QLFS), 209-267 (PRCA…AMFS), 268-326 (PKCG…HRRG), and 327-386 (TLCH…LFPL).

Belongs to the paxillin family. As to quaternary structure, interacts with PTPN22. Interacts with unphosphorylated ITGA4. Interacts with PTK2B/PYK2, PTPN12, AR and SRF. Interacts (via LD motif 3) with LYN and the interaction is induced upon B-cell antigen receptor (BCR) activation. Interacts (via LD motif 3) with PTK2/FAK. Phosphorylated on tyrosine residues. Phosphorylation on Tyr-72 is important for its inhibitory function. Bombesin stimulates phosphorylation on Tyr-22, Tyr-62 and Tyr-72. In terms of tissue distribution, macrophages, monocytes and osteoclasts (at protein level). Strongly expressed in cells and tissues of hematopoietic origin. Highest expression in lymphoid tissues such as spleen, lymph node, thymus and appendix and in the vascular smooth muscle. Lower levels in bone marrow and fetal liver. Also expressed in peripheral blood lymphocytes and a number of hematopoietic cell lines. Very low levels found in epithelial cell lines. Expressed in prostate cancer (PCa) cells and its expression intensity is directly linked to PCa progression.

The protein localises to the cytoplasm. It is found in the cell junction. It localises to the focal adhesion. Its subcellular location is the nucleus. The protein resides in the perinuclear region. The protein localises to the cell projection. It is found in the podosome. It localises to the cell membrane. Its function is as follows. Transcriptional coactivator for androgen receptor (AR) and serum response factor (SRF). Contributes to the regulation of cell adhesion, spreading and cell migration and acts as a negative regulator in integrin-mediated cell adhesion events. Suppresses the integrin-induced tyrosine phosphorylation of paxillin (PXN). May play a critical role as an adapter protein in the formation of the adhesion zone in osteoclasts. Negatively regulates B-cell antigen receptor (BCR) signaling. The polypeptide is Leupaxin (LPXN) (Homo sapiens (Human)).